Here is a 313-residue protein sequence, read N- to C-terminus: Cytosolic Fe-S cluster assembly factor NUBP1 homolog (313 aa).

A disordered region spans residues 1–25; the sequence is MSDVPDDANAGCPGTGSAGAGKASG. C12, C26, C29, and C35 together coordinate [4Fe-4S] cluster. 66-73 contributes to the ATP binding site; sequence GKGGVGKS. C240 and C243 together coordinate [4Fe-4S] cluster.

This sequence belongs to the Mrp/NBP35 ATP-binding proteins family. NUBP1/NBP35 subfamily. In terms of assembly, heterotetramer of 2 NUBP1 and 2 NUBP2 chains. [4Fe-4S] cluster is required as a cofactor. Expressed in head amphid and labial ciliated sensory neurons and tail phasmid ciliated chemosensory neurons.

It localises to the cytoplasm. Its subcellular location is the cell projection. In terms of biological role, component of the cytosolic iron-sulfur (Fe/S) protein assembly (CIA) machinery. Required for maturation of extramitochondrial Fe-S proteins. The NUBP1-NUBP2 heterotetramer forms a Fe-S scaffold complex, mediating the de novo assembly of an Fe-S cluster and its transfer to target apoproteins. Regulates cilium formation and structure. In Caenorhabditis elegans, this protein is Cytosolic Fe-S cluster assembly factor NUBP1 homolog.